Here is a 340-residue protein sequence, read N- to C-terminus: Guanine nucleotide-binding protein G(I)/G(S)/G(T) subunit beta-1 (340 aa).

WD repeat units follow at residues 53–83 (GHLA…IVWD), 95–125 (LRSS…SIYS), 141–170 (GHTG…ALWD), 182–212 (GHTG…KLWD), 224–254 (GHES…RLFD), 268–298 (NIIC…NVWD), and 310–340 (GHDN…KIWN).

Belongs to the WD repeat G protein beta family. G proteins are composed of 3 units, alpha, beta and gamma.

Functionally, guanine nucleotide-binding proteins (G proteins) are involved as a modulator or transducer in various transmembrane signaling systems. The beta and gamma chains are required for the GTPase activity, for replacement of GDP by GTP, and for G protein-effector interaction. The chain is Guanine nucleotide-binding protein G(I)/G(S)/G(T) subunit beta-1 (GBETA1) from Homarus americanus (American lobster).